We begin with the raw amino-acid sequence, 460 residues long: EPD1-interacting receptor-like cytoplasmic serine/threonine-protein kinase 5D (460 aa).

One can recognise a Protein kinase domain in the interval 83 to 364 (FSSANFLGEG…DVVNILEPLL (282 aa)). ATP-binding positions include 89-97 (LGEGGFGPV) and K118. 2 positions are modified to phosphotyrosine: Y163 and Y165. D213 serves as the catalytic Proton acceptor.

This sequence belongs to the protein kinase superfamily. Ser/Thr protein kinase family. As to quaternary structure, interacts with the V.dahliae elicitor EPD1 (AC G2WWH6). Post-translationally, phosphorylated at Tyr-163 and Tyr-165 in the presence of pathogen-associated molecular patterns (PAMPs); this triggers the expression of pathogenesis-related genes. As to expression, mostly expressed in roots and, to a lesser extent, in leaves.

It localises to the cell membrane. The catalysed reaction is L-seryl-[protein] + ATP = O-phospho-L-seryl-[protein] + ADP + H(+). The enzyme catalyses L-threonyl-[protein] + ATP = O-phospho-L-threonyl-[protein] + ADP + H(+). Required for pathogen-associated molecular pattern (PAMP, e.g. chitin and flg22)-triggered immunity (PTI) involving reactive oxygen species (ROS) accumulation and triggering plant defense, including defense-related gene expression (e.g. PR1 and LOX). Ensures specific recognition of the EPD1 effector of Verticillium dahliae, resulting in a hypersensitive response known as effector-triggered immunity (ETI), characterized by the activation of programmed cell death to limit infection by the pathogen. Priming plants with the incompatible pathogen V.dahliae leads to an increased resistance to compatible pathogens, as a result of systemic acquired resistance (SAR). This is EPD1-interacting receptor-like cytoplasmic serine/threonine-protein kinase 5D from Gossypium barbadense (Sea Island cotton).